The primary structure comprises 145 residues: uncharacterized protein (145 aa).

Disordered regions lie at residues 1–41 (MRRL…PPGT) and 122–145 (RLPSLVHGPSHPDSQHPREVPLAL). The segment covering 20–34 (GGPQNGTSGCTTAPQ) has biased composition (polar residues). The span at 134 to 145 (DSQHPREVPLAL) shows a compositional bias: basic and acidic residues.

In terms of tissue distribution, ubiquitous.

This is an uncharacterized protein from Homo sapiens (Human).